The chain runs to 202 residues: CASP-like protein 2B1 (202 aa).

Over 1 to 29 (MSYLGVGVSPGNVPVYHGTNSKVIDRRVR) the chain is Cytoplasmic. Residues 30 to 50 (LAELVLRCVICCLGVLAAVLV) traverse the membrane as a helical segment. The Extracellular portion of the chain corresponds to 51-72 (GTDTQVKEIFSIQKKARFTDMK). Residues 73 to 93 (ALVFLVAANGIAAAYSFVQGV) traverse the membrane as a helical segment. Residues 94-109 (RCVVGMVKGSVLFSKP) are Cytoplasmic-facing. The helical transmembrane segment at 110–132 (LAWVIFSGDQMMAYLTMSAVAAA) threads the bilayer. At 133 to 164 (AQSSVFAKLGQPDLQWMKICTMYGKFCNQVGE) the chain is on the extracellular side. The chain crosses the membrane as a helical span at residues 165–185 (GIASALLVSVSMVVLSCISAF). Topologically, residues 186 to 202 (SLFRLYGGNKGKDGARW) are cytoplasmic.

This sequence belongs to the Casparian strip membrane proteins (CASP) family. Homodimer and heterodimers.

It localises to the cell membrane. In Populus trichocarpa (Western balsam poplar), this protein is CASP-like protein 2B1.